A 458-amino-acid chain; its full sequence is UDP-N-acetylmuramoylalanine--D-glutamate ligase (458 aa).

Residue 124-130 (GSDGKTT) coordinates ATP.

It belongs to the MurCDEF family.

It is found in the cytoplasm. It catalyses the reaction UDP-N-acetyl-alpha-D-muramoyl-L-alanine + D-glutamate + ATP = UDP-N-acetyl-alpha-D-muramoyl-L-alanyl-D-glutamate + ADP + phosphate + H(+). The protein operates within cell wall biogenesis; peptidoglycan biosynthesis. Its function is as follows. Cell wall formation. Catalyzes the addition of glutamate to the nucleotide precursor UDP-N-acetylmuramoyl-L-alanine (UMA). The sequence is that of UDP-N-acetylmuramoylalanine--D-glutamate ligase from Clostridium botulinum (strain Alaska E43 / Type E3).